The chain runs to 309 residues: tRNA pseudouridine synthase B (309 aa).

Residue D51 is the Nucleophile of the active site.

The protein belongs to the pseudouridine synthase TruB family. Type 1 subfamily.

It carries out the reaction uridine(55) in tRNA = pseudouridine(55) in tRNA. In terms of biological role, responsible for synthesis of pseudouridine from uracil-55 in the psi GC loop of transfer RNAs. This chain is tRNA pseudouridine synthase B, found in Coxiella burnetii (strain RSA 493 / Nine Mile phase I).